The following is a 153-amino-acid chain: uncharacterized protein (153 aa).

Positions 72-98 are disordered; it reads LPISKTNDAERSQQTTKAPVMERTESS.

It localises to the cytoplasm. It is found in the nucleus. This is an uncharacterized protein from Schizosaccharomyces pombe (strain 972 / ATCC 24843) (Fission yeast).